The sequence spans 231 residues: Ribose-5-phosphate isomerase A (231 aa).

Substrate contacts are provided by residues 31-34, 86-89, and 100-103; these read TGST, DGAD, and KGLG. E109 acts as the Proton acceptor in catalysis. Position 127 (K127) interacts with substrate.

Belongs to the ribose 5-phosphate isomerase family. In terms of assembly, homodimer.

It carries out the reaction aldehydo-D-ribose 5-phosphate = D-ribulose 5-phosphate. The protein operates within carbohydrate degradation; pentose phosphate pathway; D-ribose 5-phosphate from D-ribulose 5-phosphate (non-oxidative stage): step 1/1. Catalyzes the reversible conversion of ribose-5-phosphate to ribulose 5-phosphate. The chain is Ribose-5-phosphate isomerase A from Gluconobacter oxydans (strain 621H) (Gluconobacter suboxydans).